Consider the following 707-residue polypeptide: MNPIVKQFKYGQHTVTLETGAIARQATAAVMASMDDTTVFVSVVAKKEVKEGQDFFPLTVDYQERSYAAGKIPGGFFKREGRPSEGETLIARLIDRPIRPLFPEGFLNEIQIIATVVSVNPQISPDLVAMIGASAALALSGVPFNGPIGAARVGFINDQFVLNPTMAEQKQSRLDLVVAGTDKAVLMVESEADILTEEQMLAAVVFGHQQQQVVIEAIKELVKEAGKPRWDWVAPEPDTALINQVKVIAESRLGDAYRITEKQVRYEQIDAIKADVIAQITAENEEVSEGKIVDIFTALESQIVRGRIIAGEPRIDGRTVDTVRALDICTGVLPRTHGSAIFTRGETQALAVVTLGTERDAQILDELTGERQDTFLFHYNFPPYSVGETGRVGSPKRREIGHGRLAKRGVAAVMPSISEFPYVVRVVSEITESNGSSSMASVCGASLALMDAGVPVKSAVAGIAMGLVKEEDKFVVLSDILGDEDHLGDMDFKVAGTRTGVTALQMDIKIEGITPEIMQIALNQAKSARMHILGVMEQAIAAPRAEISEYAPRIYTMKIDPKKIKDVIGKGGATIRTLTEETGTSIDIDDDGTVKIAAIDGNAVKEVMARIEEITAEVEAGAVYTGKVTRLADFGAFVAILGNKEGLVHISQIAEERVEKVSDYLQVGQDVQVKVVEIDRQGRIRLTMKDIVSKAENADAQTDIVEE.

Mg(2+)-binding residues include aspartate 485 and aspartate 491. The region spanning 552-611 (PRIYTMKIDPKKIKDVIGKGGATIRTLTEETGTSIDIDDDGTVKIAAIDGNAVKEVMARI) is the KH domain. One can recognise an S1 motif domain in the interval 621 to 689 (GAVYTGKVTR…RQGRIRLTMK (69 aa)).

The protein belongs to the polyribonucleotide nucleotidyltransferase family. As to quaternary structure, component of the RNA degradosome, which is a multiprotein complex involved in RNA processing and mRNA degradation. Mg(2+) is required as a cofactor.

The protein resides in the cytoplasm. The catalysed reaction is RNA(n+1) + phosphate = RNA(n) + a ribonucleoside 5'-diphosphate. Involved in mRNA degradation. Catalyzes the phosphorolysis of single-stranded polyribonucleotides processively in the 3'- to 5'-direction. The polypeptide is Polyribonucleotide nucleotidyltransferase (Actinobacillus succinogenes (strain ATCC 55618 / DSM 22257 / CCUG 43843 / 130Z)).